Consider the following 412-residue polypeptide: uncharacterized protein (412 aa).

A run of 7 repeats spans residues 112 to 116 (GSIRS), 117 to 121 (GSIRS), 122 to 126 (GSIRD), 127 to 131 (GSIRD), 132 to 136 (GSIRS), 137 to 141 (GNIRD), and 142 to 146 (GSVRS). Residues 112–146 (GSIRSGSIRSGSIRDGSIRDGSIRSGNIRDGSVRS) are 7 X 5 AA tandem repeats of G-[NS]-[IV]-R-[DS]. Low complexity predominate over residues 116-126 (SGSIRSGSIRD). The interval 116–209 (SGSIRSGSIR…SEKSIKPSTK (94 aa)) is disordered. The span at 192–209 (NHYAESEYSEKSIKPSTK) shows a compositional bias: basic and acidic residues.

The protein belongs to the asfivirus B407L family.

This is an uncharacterized protein from Ornithodoros (relapsing fever ticks).